The following is a 400-amino-acid chain: MEPHFFFTVLWMLLMGTSSTYAQEIFGYCRTPDENSGTCINLRECGYLFELLQSEEVTEQDRRFLQASQCGYRNGQVLEKHFCFTNVQICCANSRMRNQQPQWGNHPQPTQTTKPTKRSGTKLLPMAPNCGENFGDRVVGGNETTKREFPWMALIEYTKPGNVKGHHCGGSLINHRYVLTAAHCVSAIPSDWELTGVRLGEWDASTNPDCTVGKNGRRDCNEPYVDYPVEERIPHPQYPGNSRDQLNDIALLRLRDEVQYSDFILPVCLPTLASQHNNIFLGRKVVVAGWGRTETNFTSNIKLKAELDTVPTSECNQRYATQRRTVTTKQMCAGGVEGVDSCRGDSGGPLLLEDYSNGNSNYYIAGVVSYGPTPCGLKGWPGVYTRVEAYLNWIENNVRA.

An N-terminal signal peptide occupies residues 1–22 (MEPHFFFTVLWMLLMGTSSTYA). A propeptide spans 23-137 (QEIFGYCRTP…PNCGENFGDR (115 aa)) (activation peptide). The region spanning 28–91 (YCRTPDENSG…FCFTNVQICC (64 aa)) is the Clip domain. 3 disulfide bridges follow: Cys29-Cys90, Cys39-Cys70, and Cys45-Cys91. Positions 98–120 (NQQPQWGNHPQPTQTTKPTKRSG) are disordered. 3 disulfides stabilise this stretch: Cys130–Cys268, Cys168–Cys184, and Cys210–Cys220. The Peptidase S1 domain maps to 138–399 (VVGGNETTKR…YLNWIENNVR (262 aa)). An N-linked (GlcNAc...) asparagine glycan is attached at Asn142. His183 functions as the Charge relay system in the catalytic mechanism. Glu201, Asp203, Thr206, and Asp209 together coordinate Ca(2+). Catalysis depends on Asp248, which acts as the Charge relay system. Asn296 carries N-linked (GlcNAc...) asparagine glycosylation. 2 disulfide bridges follow: Cys315-Cys332 and Cys342-Cys375. The Charge relay system role is filled by Ser346.

The protein belongs to the peptidase S1 family. CLIP subfamily.

Serine protease which plays an essential role in the melanization immune response by acting downstream of sp7 to activate prophenoloxidase (PPO1). May function in diverse Hayan-dependent PPO1-activating cascades that are negatively controlled by different serpin proteins; Spn27A in the hemolymph and Spn77BA in the trachea. Regulation of melanization and PPO1 activation appears to be largely independent of the Toll signaling pathway. This Drosophila melanogaster (Fruit fly) protein is Melanization protease 1.